The following is a 231-amino-acid chain: Large ribosomal subunit protein uL1 (231 aa).

Belongs to the universal ribosomal protein uL1 family. In terms of assembly, part of the 50S ribosomal subunit.

Functionally, binds directly to 23S rRNA. The L1 stalk is quite mobile in the ribosome, and is involved in E site tRNA release. Its function is as follows. Protein L1 is also a translational repressor protein, it controls the translation of the L11 operon by binding to its mRNA. The chain is Large ribosomal subunit protein uL1 from Acinetobacter baylyi (strain ATCC 33305 / BD413 / ADP1).